The sequence spans 263 residues: 3-methyl-2-oxobutanoate hydroxymethyltransferase (263 aa).

Residues Asp-45 and Asp-84 each contribute to the Mg(2+) site. 3-methyl-2-oxobutanoate-binding positions include 45–46 (DS), Asp-84, and Lys-112. A Mg(2+)-binding site is contributed by Glu-114. Glu-180 serves as the catalytic Proton acceptor.

It belongs to the PanB family. Homodecamer; pentamer of dimers. The cofactor is Mg(2+).

The protein resides in the cytoplasm. The catalysed reaction is 3-methyl-2-oxobutanoate + (6R)-5,10-methylene-5,6,7,8-tetrahydrofolate + H2O = 2-dehydropantoate + (6S)-5,6,7,8-tetrahydrofolate. Its pathway is cofactor biosynthesis; (R)-pantothenate biosynthesis; (R)-pantoate from 3-methyl-2-oxobutanoate: step 1/2. Functionally, catalyzes the reversible reaction in which hydroxymethyl group from 5,10-methylenetetrahydrofolate is transferred onto alpha-ketoisovalerate to form ketopantoate. In Citrobacter koseri (strain ATCC BAA-895 / CDC 4225-83 / SGSC4696), this protein is 3-methyl-2-oxobutanoate hydroxymethyltransferase.